Consider the following 503-residue polypeptide: Putative ribose/galactose/methyl galactoside import ATP-binding protein (503 aa).

ABC transporter domains follow at residues 7–244 (LEMI…VGRE) and 254–498 (VPIG…TGQL). 39-46 (GENGAGKS) serves as a coordination point for ATP.

Belongs to the ABC transporter superfamily. Carbohydrate importer 2 (CUT2) (TC 3.A.1.2) family.

It is found in the cell membrane. It carries out the reaction D-ribose(out) + ATP + H2O = D-ribose(in) + ADP + phosphate + H(+). The enzyme catalyses D-galactose(out) + ATP + H2O = D-galactose(in) + ADP + phosphate + H(+). In terms of biological role, part of an ABC transporter complex involved in carbohydrate import. Could be involved in ribose, galactose and/or methyl galactoside import. Responsible for energy coupling to the transport system. This chain is Putative ribose/galactose/methyl galactoside import ATP-binding protein, found in Geobacillus kaustophilus (strain HTA426).